Reading from the N-terminus, the 414-residue chain is Serine hydroxymethyltransferase (414 aa).

(6S)-5,6,7,8-tetrahydrofolate-binding positions include L121 and 125-127 (GHL). K229 is subject to N6-(pyridoxal phosphate)lysine.

The protein belongs to the SHMT family. As to quaternary structure, homodimer. Requires pyridoxal 5'-phosphate as cofactor.

It localises to the cytoplasm. The enzyme catalyses (6R)-5,10-methylene-5,6,7,8-tetrahydrofolate + glycine + H2O = (6S)-5,6,7,8-tetrahydrofolate + L-serine. Its pathway is one-carbon metabolism; tetrahydrofolate interconversion. The protein operates within amino-acid biosynthesis; glycine biosynthesis; glycine from L-serine: step 1/1. Catalyzes the reversible interconversion of serine and glycine with tetrahydrofolate (THF) serving as the one-carbon carrier. This reaction serves as the major source of one-carbon groups required for the biosynthesis of purines, thymidylate, methionine, and other important biomolecules. Also exhibits THF-independent aldolase activity toward beta-hydroxyamino acids, producing glycine and aldehydes, via a retro-aldol mechanism. This chain is Serine hydroxymethyltransferase, found in Verminephrobacter eiseniae (strain EF01-2).